The sequence spans 232 residues: Glycerol-3-phosphate acyltransferase (232 aa).

6 consecutive transmembrane segments (helical) span residues 4-24 (FLAI…IIAG), 56-76 (VVTL…VGFF), 90-110 (IALS…TVFA), 124-144 (MLIG…LLAV), 152-172 (VGSI…KYVF), and 191-211 (SLDY…IYTH).

The protein belongs to the PlsY family. Probably interacts with PlsX.

It is found in the cell inner membrane. The enzyme catalyses an acyl phosphate + sn-glycerol 3-phosphate = a 1-acyl-sn-glycero-3-phosphate + phosphate. It functions in the pathway lipid metabolism; phospholipid metabolism. Catalyzes the transfer of an acyl group from acyl-phosphate (acyl-PO(4)) to glycerol-3-phosphate (G3P) to form lysophosphatidic acid (LPA). This enzyme utilizes acyl-phosphate as fatty acyl donor, but not acyl-CoA or acyl-ACP. This is Glycerol-3-phosphate acyltransferase from Chlorobaculum tepidum (strain ATCC 49652 / DSM 12025 / NBRC 103806 / TLS) (Chlorobium tepidum).